A 551-amino-acid polypeptide reads, in one-letter code: Probable terpene synthase 8 (551 aa).

Positions 307, 311, and 457 each coordinate Mg(2+). The short motif at 307–311 is the DDXXD motif element; that stretch reads DDTYD.

It belongs to the terpene synthase family. Mg(2+) is required as a cofactor.

Probable sesquiterpene synthase. The chain is Probable terpene synthase 8 (TPS8) from Ricinus communis (Castor bean).